Here is a 294-residue protein sequence, read N- to C-terminus: Probable enoyl-CoA hydratase 2 (294 aa).

(3R)-3-hydroxydecanoyl-CoA-binding positions include 84 to 85 (HG), Lys113, 190 to 195 (DLNPLH), Gly213, and Phe243. The region spanning 165-269 (DRAPDAISKQ…INPTTILFQS (105 aa)) is the MaoC-like domain. The Microbody targeting signal motif lies at 292-294 (GSL).

The protein belongs to the short-chain dehydrogenases/reductases (SDR) family.

The protein resides in the peroxisome. The enzyme catalyses a (3R)-3-hydroxyacyl-CoA = a (2E)-enoyl-CoA + H2O. This Dictyostelium discoideum (Social amoeba) protein is Probable enoyl-CoA hydratase 2 (mfeB).